A 514-amino-acid chain; its full sequence is MLLLLLLGSLTIVFYIWQRRTLSFWERHGVKYIRPFPVVGCTREFLTAKVPFFEQIQKFHEAPGFENEPFVGVYMTHRPALVIRDLELIKTVMIKKFQYFNNRVLQTDPHNDALGYKNLFFARSPGWRELRTKISPVFTSGKIKQMYPLMVKIGKNLQDSAERLGSGTEVQVKDLCSRFTTDLIATIAFGVEANALQDAKSEFFYHNRAIFSLTLSRGIDFAIIFMIPALASLARVKLFSRETTKFIRSSVNYVLKERERTGEKRNDLIDILLALKREAAANPGKMSKEVDLDYLVAQAAVFQTAGFETSASTMTMTLYELAKNEALQDRLRQEIVDFFGDEDHISYERIQEMPYLSQVVNETLRKYPIVGYIERECSQPAEGERFTLEPFHNMELPHGMSIYMSTVAVHRDPQYWPDPEKYDPERFNSSNRDNLNMDAYMPFGVGPRNCIGMRLGLLQSKLGLVHILRNHRFHTCDKTIKKIEWAPTSPVMASKRDIILRVEKVSGKKDFGQK.

Cysteine 450 serves as a coordination point for heme.

Belongs to the cytochrome P450 family. Requires heme as cofactor.

The protein localises to the endoplasmic reticulum membrane. It localises to the microsome membrane. Functionally, may be involved in the metabolism of insect hormones and in the breakdown of synthetic insecticides. In Drosophila melanogaster (Fruit fly), this protein is Probable cytochrome P450 6w1 (Cyp6w1).